We begin with the raw amino-acid sequence, 283 residues long: E3 ubiquitin-protein ligase MARCHF5 (283 aa).

The RING-CH-type zinc-finger motif lies at 9–78; it reads VQQMLDRSCW…PQCNAEYLIV (70 aa). Zn(2+) contacts are provided by C17, C20, C36, C38, H46, C49, C68, and C71. The next 4 membrane-spanning stretches (helical) occupy residues 102 to 122, 142 to 162, 212 to 232, and 241 to 261; these read FAAAGIMVGSIYWTAVTYGAV, PLFLLIGLPTIPVVLILGKMI, ILCGALVFPTIATIVGKLMFS, and TILGGIAFVAIKGAFKVYFKQ.

The protein localises to the mitochondrion outer membrane. It is found in the endoplasmic reticulum membrane. The catalysed reaction is S-ubiquitinyl-[E2 ubiquitin-conjugating enzyme]-L-cysteine + [acceptor protein]-L-lysine = [E2 ubiquitin-conjugating enzyme]-L-cysteine + N(6)-ubiquitinyl-[acceptor protein]-L-lysine.. Its pathway is protein modification; protein ubiquitination. In terms of biological role, mitochondrial E3 ubiquitin-protein ligase that plays a crucial role in the control of mitochondrial morphology by acting as a positive regulator of mitochondrial fission. May play a role in the prevention of cell senescence acting as a regulator of mitochondrial quality control. This chain is E3 ubiquitin-protein ligase MARCHF5 (marchf5), found in Xenopus laevis (African clawed frog).